Here is a 1006-residue protein sequence, read N- to C-terminus: DNA polymerase (1006 aa).

Belongs to the DNA polymerase type-B family. Interacts with OPG148. Component of the Uracil-DNA glycosylase(UDG)-OPG148-polymerase complex; OPG148 and OPG116/UDG form a heterodimeric processivity factor that associates with OPG071 to form the processive polymerase holoenzyme.

It carries out the reaction DNA(n) + a 2'-deoxyribonucleoside 5'-triphosphate = DNA(n+1) + diphosphate. Functionally, catalyzes DNA synthesis. Acquires processivity by associating with a heterodimeric processivity factor comprised of the viral OPG148 and OPG116 proteins, thereby forming the DNA polymerase holoenzyme. Displays 3'- to 5' exonuclease activity. Might participate in viral DNA recombination. Does not perform OPG116/D4synthesis across an abasic site. The protein is DNA polymerase (OPG071) of Homo sapiens (Human).